A 91-amino-acid chain; its full sequence is Early E3B 10.4 kDa protein (91 aa).

A signal peptide spans 1 to 22 (MIPRNFFFTILICPFNVCATFT). At 23–34 (AVATASPDCIGP) the chain is on the lumenal side. Residues 35–60 (FASYALFAFVTCICVCSIVCLVINFF) form a helical membrane-spanning segment. At 61-91 (QLVDWIFVRIAYLRHHPEYRNQNVAALLRLI) the chain is on the cytoplasmic side.

This sequence belongs to the adenoviridae E3B family.

The protein localises to the host endoplasmic reticulum membrane. Functionally, down-regulates the EGF receptor. In Human adenovirus B serotype 3 (HAdV-3), this protein is Early E3B 10.4 kDa protein.